We begin with the raw amino-acid sequence, 1175 residues long: Pyruvate carboxylase (1175 aa).

Residues 22–474 enclose the Biotin carboxylation domain; it reads NANKILVANR…WTTFIDDTPS (453 aa). ATP is bound by residues Lys-140, Glu-224, and His-259. An ATP-grasp domain is found at 144 to 341; that stretch reads RNLAGKCNVP…IVAAQIQIAA (198 aa). Residue Arg-316 is part of the active site. One can recognise a Pyruvate carboxyltransferase domain in the interval 561–828; it reads CLIMDTTWRD…NTGITEQNAR (268 aa). Substrate contacts are provided by residues 569-573 and Arg-642; that span reads RDAHQ. Asp-570 is an a divalent metal cation binding site. 3 residues coordinate a divalent metal cation: Lys-738, His-768, and His-770. The residue at position 738 (Lys-738) is an N6-carboxylysine. Thr-902 provides a ligand contact to substrate. The region spanning 1099–1174 is the Biotinyl-binding domain; that stretch reads KADAHNPNEV…DAGDLICKIT (76 aa). The residue at position 1140 (Lys-1140) is an N6-biotinyllysine.

The cofactor is biotin. Zn(2+) is required as a cofactor.

It localises to the cytoplasm. The enzyme catalyses hydrogencarbonate + pyruvate + ATP = oxaloacetate + ADP + phosphate + H(+). The protein operates within carbohydrate biosynthesis; gluconeogenesis. Functionally, pyruvate carboxylase catalyzes a 2-step reaction, involving the ATP-dependent carboxylation of the covalently attached biotin in the first step and the transfer of the carboxyl group to pyruvate in the second. This chain is Pyruvate carboxylase (PYC), found in Pichia angusta (Yeast).